Reading from the N-terminus, the 229-residue chain is Endo-1,4-beta-xylanase 1 (229 aa).

The N-terminal stretch at 1–19 (MVAFSSLICALTSIASTLA) is a signal peptide. Residues 20 to 51 (MPTGLEPESSVNVTERGMYDFVLGAHNDHRRR) constitute a propeptide that is removed on maturation. Asn-31 carries an N-linked (GlcNAc...) asparagine glycan. Residues 42–228 (LGAHNDHRRR…GSGSASQSVS (187 aa)) enclose the GH11 domain. Position 117 (Tyr-117) interacts with substrate. Catalysis depends on Glu-126, which acts as the Nucleophile. Tyr-128, Arg-160, Pro-164, Gln-174, and Tyr-209 together coordinate substrate. The Proton donor role is filled by Glu-215.

The protein belongs to the glycosyl hydrolase 11 (cellulase G) family.

Its subcellular location is the secreted. The catalysed reaction is Endohydrolysis of (1-&gt;4)-beta-D-xylosidic linkages in xylans.. It functions in the pathway glycan degradation; xylan degradation. Its function is as follows. Glycoside hydrolase involved in the hydrolysis of xylan, a major plant cell wall hemicellulose made up of 1,4-beta-linked D-xylopyranose residues. Catalyzes the endohydrolysis of the main-chain 1,4-beta-glycosidic bonds connecting the xylose subunits yielding various xylooligosaccharides and xylose. The polypeptide is Endo-1,4-beta-xylanase 1 (Hypocrea jecorina (strain QM6a) (Trichoderma reesei)).